Here is a 303-residue protein sequence, read N- to C-terminus: Probable cell division protein WhiA (303 aa).

Positions 272–303 (SIQQVADALEFPITKSGVNHRLRKINKIADDL) form a DNA-binding region, H-T-H motif.

Belongs to the WhiA family.

Its function is as follows. Involved in cell division and chromosome segregation. The chain is Probable cell division protein WhiA from Streptococcus pyogenes serotype M3 (strain ATCC BAA-595 / MGAS315).